A 507-amino-acid chain; its full sequence is Germ cell nuclear acidic protein (507 aa).

Residues 1–51 show a composition bias toward low complexity; it reads MDSGSSSSSSSSGSSSGSCSTSGSGSTSGSSTTSSSSSSSSSSSSSSSSSS. The segment at 1–507 is disordered; it reads MDSGSSSSSS…GRGRGAKAGK (507 aa). 4 short sequence motifs (SUMO interaction motif 1 (SIM)) span residues 12-15, 66-69, 86-89, and 108-111; these read SGSS, CVVI, VCEI, and LIVI. Composition is skewed to basic and acidic residues over residues 122–141, 179–354, and 431–449; these read KNTK…KEGV, SEAK…KGEM, and PQDR…RGDS. The segment covering 480–507 has biased composition (basic residues); sequence GRGRGRGRGRGRGRGRGRGRGRGAKAGK.

It belongs to the serine-aspartate repeat-containing protein (SDr) family. As to quaternary structure, interacts (via SIM domains) with SUMO2; this interaction allows the GCNA recruitment to DPCs sites. Interacts with TOP2A; this interaction allows the resolution of topoisomerase II (TOP2A) DNA-protein cross-links. Germ-cells specific.

Its subcellular location is the chromosome. The protein resides in the nucleus. It is found in the PML body. Its function is as follows. May play a role in DNA-protein cross-links (DPCs) clearance through a SUMO-dependent recruitment to sites of DPCs, ensuring the genomic stability by protecting germ cells and early embryos from various sources of damage. Can resolve the topoisomerase II (TOP2A) DPCs. The sequence is that of Germ cell nuclear acidic protein from Mus musculus (Mouse).